A 360-amino-acid chain; its full sequence is Histidinol-phosphate aminotransferase (360 aa).

Residue K211 is modified to N6-(pyridoxal phosphate)lysine.

The protein belongs to the class-II pyridoxal-phosphate-dependent aminotransferase family. Histidinol-phosphate aminotransferase subfamily. In terms of assembly, homodimer. Requires pyridoxal 5'-phosphate as cofactor.

It carries out the reaction L-histidinol phosphate + 2-oxoglutarate = 3-(imidazol-4-yl)-2-oxopropyl phosphate + L-glutamate. The protein operates within amino-acid biosynthesis; L-histidine biosynthesis; L-histidine from 5-phospho-alpha-D-ribose 1-diphosphate: step 7/9. The sequence is that of Histidinol-phosphate aminotransferase from Cronobacter sakazakii (strain ATCC BAA-894) (Enterobacter sakazakii).